Reading from the N-terminus, the 342-residue chain is Holliday junction branch migration complex subunit RuvB (342 aa).

The tract at residues 1–185 (MTVKPLRDVT…FPIQERLEYY (185 aa)) is large ATPase domain (RuvB-L). ATP contacts are provided by residues leucine 24, arginine 25, glycine 66, lysine 69, threonine 70, serine 71, 132–134 (EDY), arginine 175, tyrosine 185, and arginine 222. Threonine 70 contributes to the Mg(2+) binding site. The segment at 186-256 (GPAELKEIAV…VVDRTLRRLE (71 aa)) is small ATPAse domain (RuvB-S). The interval 259-342 (ARGLDAMDRR…RSGGKQGSLV (84 aa)) is head domain (RuvB-H). Residues arginine 314 and arginine 319 each coordinate DNA.

Belongs to the RuvB family. In terms of assembly, homohexamer. Forms an RuvA(8)-RuvB(12)-Holliday junction (HJ) complex. HJ DNA is sandwiched between 2 RuvA tetramers; dsDNA enters through RuvA and exits via RuvB. An RuvB hexamer assembles on each DNA strand where it exits the tetramer. Each RuvB hexamer is contacted by two RuvA subunits (via domain III) on 2 adjacent RuvB subunits; this complex drives branch migration. In the full resolvosome a probable DNA-RuvA(4)-RuvB(12)-RuvC(2) complex forms which resolves the HJ.

It localises to the cytoplasm. The enzyme catalyses ATP + H2O = ADP + phosphate + H(+). The RuvA-RuvB-RuvC complex processes Holliday junction (HJ) DNA during genetic recombination and DNA repair, while the RuvA-RuvB complex plays an important role in the rescue of blocked DNA replication forks via replication fork reversal (RFR). RuvA specifically binds to HJ cruciform DNA, conferring on it an open structure. The RuvB hexamer acts as an ATP-dependent pump, pulling dsDNA into and through the RuvAB complex. RuvB forms 2 homohexamers on either side of HJ DNA bound by 1 or 2 RuvA tetramers; 4 subunits per hexamer contact DNA at a time. Coordinated motions by a converter formed by DNA-disengaged RuvB subunits stimulates ATP hydrolysis and nucleotide exchange. Immobilization of the converter enables RuvB to convert the ATP-contained energy into a lever motion, pulling 2 nucleotides of DNA out of the RuvA tetramer per ATP hydrolyzed, thus driving DNA branch migration. The RuvB motors rotate together with the DNA substrate, which together with the progressing nucleotide cycle form the mechanistic basis for DNA recombination by continuous HJ branch migration. Branch migration allows RuvC to scan DNA until it finds its consensus sequence, where it cleaves and resolves cruciform DNA. The chain is Holliday junction branch migration complex subunit RuvB from Anaeromyxobacter dehalogenans (strain 2CP-C).